A 397-amino-acid polypeptide reads, in one-letter code: Transcription factor GATA-5 (397 aa).

The segment at 48–116 (GCEPSPQPPE…SAGGRDGSAY (69 aa)) is disordered. Residues 87–101 (PPGATAFPFAHSPSG) show a composition bias toward low complexity. The segment covering 102 to 112 (PGSGGSAGGRD) has biased composition (gly residues). 2 consecutive GATA-type zinc fingers follow at residues 189–213 (CVNCGALSTPLWRRDGTGHYLCNAC) and 243–267 (CTNCHTTNTTLWRRNSEGEPVCNAC). The segment at 281–356 (AMKKESIQTR…ASGQEDDSLA (76 aa)) is disordered. Residues 289–298 (TRKRKPKTIA) show a composition bias toward basic residues. The segment covering 310 to 335 (ASASPSAVASTDSSAATSKAKPSLAS) has biased composition (low complexity).

The protein resides in the nucleus. Transcription factor required during cardiovascular development. Plays an important role in the transcriptional program(s) that underlies smooth muscle cell diversity. Binds to the functionally important CEF-1 nuclear protein binding site in the cardiac-specific slow/cardiac troponin C transcriptional enhancer. The polypeptide is Transcription factor GATA-5 (Homo sapiens (Human)).